The primary structure comprises 200 residues: Prophage tail fiber assembly protein homolog TfaE (200 aa).

This sequence belongs to the tfa family.

In Escherichia coli (strain K12), this protein is Prophage tail fiber assembly protein homolog TfaE (tfaE).